Consider the following 432-residue polypeptide: C2H2 type master regulator of conidiophore development brlA (432 aa).

2 disordered regions span residues 22–72 and 238–260; these read SNEC…RTPG and KQHS…ADTP. Over residues 29 to 44 the composition is skewed to low complexity; the sequence is TSSFSPLESPTPTPTS. Composition is skewed to polar residues over residues 62 to 72 and 238 to 252; these read LPNNTYERTPG and KQHS…CSLG. 2 C2H2-type zinc fingers span residues 320–344 and 350–375; these read FKCK…MKSH and HVCW…TKTH. The disordered stretch occupies residues 388 to 432; sequence LDENSPDYDPEFRGQLTPDGRPIYGSKLDDPIPGAGDMSLDGWDE.

It is found in the nucleus. Its function is as follows. BrlA, abaA and wetA are pivotal regulators of conidiophore development and conidium maturation. They act individually and together to regulate their own expression and that of numerous other sporulation-specific genes. Binds promoters of target genes at brlA response elements (BREs) containing the conserved sequence 5'-(C/A)(A/G)AGGG(G/A)-3'. Controls the expression of the conidiophore-specific phenol oxidase ivoB. Controls the expression of the hydrophobin rodA. Mediates the developmental switch from the indeterminate, apical growth pattern of vegetative cells to the budding growth pattern of conidiophores. Expression of brlA leads to activation of abaA, wetA and stuA, cessation of vegetative growth, cellular vacuolization and spore formation. The polypeptide is C2H2 type master regulator of conidiophore development brlA (Emericella nidulans (strain FGSC A4 / ATCC 38163 / CBS 112.46 / NRRL 194 / M139) (Aspergillus nidulans)).